A 250-amino-acid chain; its full sequence is MIIVFMKILRSIITYFNVLLFFLILIFFLFPFYLVCKIFLIERYVVRLSFIMMRACIKISLWLAGIKIIVTGSENIPKKSNVIIMGNHIAAMDPLIFIYTFACPFVILAKHSLLRIPFVNIVLIVMGVIFVNRRSIRSAAAAEVKAIKVMREGRSIGIFPEGTRNRGGDTRVFKKGSIKMALKTGTSILPVTLYNTNNFFIKNIIFNSGLSVYIHVHPLIDVLKLSEYEKENLTSIIRDQIVKKLETIKI.

The HXXXXD motif signature appears at 88 to 93; the sequence is HIAAMD.

It belongs to the 1-acyl-sn-glycerol-3-phosphate acyltransferase family.

The enzyme catalyses a 1-acyl-sn-glycero-3-phosphate + an acyl-CoA = a 1,2-diacyl-sn-glycero-3-phosphate + CoA. It participates in phospholipid metabolism; CDP-diacylglycerol biosynthesis; CDP-diacylglycerol from sn-glycerol 3-phosphate: step 2/3. Functionally, converts lysophosphatidic acid (LPA) into phosphatidic acid by incorporating acyl moiety at the 2 position. This is 1-acyl-sn-glycerol-3-phosphate acyltransferase (plsC) from Borreliella burgdorferi (strain ATCC 35210 / DSM 4680 / CIP 102532 / B31) (Borrelia burgdorferi).